Here is a 162-residue protein sequence, read N- to C-terminus: Endoribonuclease YbeY (162 aa).

H118, H122, and H128 together coordinate Zn(2+).

Belongs to the endoribonuclease YbeY family. Zn(2+) serves as cofactor.

It localises to the cytoplasm. Single strand-specific metallo-endoribonuclease involved in late-stage 70S ribosome quality control and in maturation of the 3' terminus of the 16S rRNA. This Caulobacter sp. (strain K31) protein is Endoribonuclease YbeY.